A 404-amino-acid chain; its full sequence is NADH-quinone oxidoreductase subunit D 2 (404 aa).

Belongs to the complex I 49 kDa subunit family. NDH-1 is composed of 14 different subunits. Subunits NuoB, C, D, E, F, and G constitute the peripheral sector of the complex.

It is found in the cell inner membrane. The catalysed reaction is a quinone + NADH + 5 H(+)(in) = a quinol + NAD(+) + 4 H(+)(out). NDH-1 shuttles electrons from NADH, via FMN and iron-sulfur (Fe-S) centers, to quinones in the respiratory chain. The immediate electron acceptor for the enzyme in this species is believed to be ubiquinone. Couples the redox reaction to proton translocation (for every two electrons transferred, four hydrogen ions are translocated across the cytoplasmic membrane), and thus conserves the redox energy in a proton gradient. This Rhizobium etli (strain ATCC 51251 / DSM 11541 / JCM 21823 / NBRC 15573 / CFN 42) protein is NADH-quinone oxidoreductase subunit D 2.